The chain runs to 466 residues: GTPase Der (466 aa).

EngA-type G domains are found at residues 30 to 193 (PVVA…PEVS) and 203 to 376 (RRVA…ASWD). Residues 36-43 (GRPNVGKS), 83-87 (DTGGW), 145-148 (NKVD), 209-216 (GKPNVGKS), 256-260 (DTAGL), and 321-324 (NKWD) contribute to the GTP site. A KH-like domain is found at 377–459 (TRIATGPLNS…PIRINVRVRE (83 aa)).

This sequence belongs to the TRAFAC class TrmE-Era-EngA-EngB-Septin-like GTPase superfamily. EngA (Der) GTPase family. Associates with the 50S ribosomal subunit.

In terms of biological role, GTPase that plays an essential role in the late steps of ribosome biogenesis. This is GTPase Der from Mycobacterium avium (strain 104).